The sequence spans 673 residues: Methionine--tRNA ligase (673 aa).

Positions 14 to 24 match the 'HIGH' region motif; sequence YYPSGKLHIGN. The short motif at 310 to 314 is the 'KMSKS' region element; sequence KMSKS. Lys313 lines the ATP pocket. A tRNA-binding domain is found at 571-673; sequence VFDKVELKVA…SEAPNGSSIS (103 aa).

The protein belongs to the class-I aminoacyl-tRNA synthetase family. MetG type 2B subfamily. Homodimer.

Its subcellular location is the cytoplasm. It catalyses the reaction tRNA(Met) + L-methionine + ATP = L-methionyl-tRNA(Met) + AMP + diphosphate. Functionally, is required not only for elongation of protein synthesis but also for the initiation of all mRNA translation through initiator tRNA(fMet) aminoacylation. The protein is Methionine--tRNA ligase (metG) of Oceanobacillus iheyensis (strain DSM 14371 / CIP 107618 / JCM 11309 / KCTC 3954 / HTE831).